The sequence spans 385 residues: Prophage integrase IntS (385 aa).

The 82-residue stretch at 91-172 folds into the Core-binding (CB) domain; the sequence is NSFSAIYKEW…RCGEVFRYAI (82 aa). The region spanning 195–373 is the Tyr recombinase domain; sequence KNFPFLPADQ…QYLDKRREMM (179 aa). Residues Arg234, Lys261, His324, Arg327, and His350 contribute to the active site. Tyr360 acts as the O-(3'-phospho-DNA)-tyrosine intermediate in catalysis.

This sequence belongs to the 'phage' integrase family.

In terms of biological role, integrase is necessary for integration of the phage into the host genome by site-specific recombination. In conjunction with excisionase, integrase is also necessary for excision of the prophage from the host genome. In Escherichia coli (strain K12), this protein is Prophage integrase IntS (intS).